The following is an 898-amino-acid chain: Cip1-interacting zinc finger protein (898 aa).

3 disordered regions span residues 48 to 69, 157 to 305, and 318 to 471; these read QAPL…QPLL, QSLL…ALEA, and VQAQ…QPQV. The span at 170–203 shows a compositional bias: polar residues; the sequence is NPSQFNLSGRNPQKQARTSSSTTPNRKDSSSQTM. Serine 209 bears the Phosphoserine mark. Phosphothreonine is present on threonine 244. Positions 263-273 are enriched in basic and acidic residues; that stretch reads RSSEEPTEKEP. Residue lysine 280 forms a Glycyl lysine isopeptide (Lys-Gly) (interchain with G-Cter in SUMO2) linkage. Positions 318–327 are enriched in low complexity; the sequence is VQAQVQSQTQ. Polar residues predominate over residues 328–351; the sequence is PRIPSTDTQVQPKLQKQAQTQTSP. Residue lysine 340 forms a Glycyl lysine isopeptide (Lys-Gly) (interchain with G-Cter in SUMO2) linkage. The residue at position 350 (serine 350) is a Phosphoserine. Residues 355 to 383 show a composition bias toward low complexity; sequence VLQQKQVQPQLQQEAEPQKQVQPQVQPQA. Residues 384 to 395 are compositionally biased toward polar residues; that stretch reads HSQGPRQVQLQQ. A Glycyl lysine isopeptide (Lys-Gly) (interchain with G-Cter in SUMO2) cross-link involves residue lysine 401. The segment covering 402–435 has biased composition (low complexity); sequence QVQPQVQPQAHSQPPRQVQLQLQKQVQTQTYPQV. Residues 436–445 are compositionally biased toward polar residues; that stretch reads HTQAQPSVQP. The residue at position 547 (serine 547) is a Phosphoserine. Residue lysine 549 forms a Glycyl lysine isopeptide (Lys-Gly) (interchain with G-Cter in SUMO2) linkage. The segment at 562 to 584 is disordered; it reads STVPLTPVPRPSDSVSSTPAATS. Threonine 567 is modified (phosphothreonine). Residues 572–584 are compositionally biased toward low complexity; it reads PSDSVSSTPAATS. Residues lysine 588, lysine 680, and lysine 705 each participate in a glycyl lysine isopeptide (Lys-Gly) (interchain with G-Cter in SUMO2) cross-link. Residues 799–830 form a Matrin-type zinc finger; it reads YICRICHKFYHSNSGAQLSHCKSLGHFENLQK. Phosphoserine is present on serine 821. Lysine 830 participates in a covalent cross-link: Glycyl lysine isopeptide (Lys-Gly) (interchain with G-Cter in SUMO2). Serine 838 carries the post-translational modification Phosphoserine. Residues 859 to 879 show a composition bias toward polar residues; it reads LFTSSGRPPSQPNTQDKTPSK. The interval 859–898 is disordered; the sequence is LFTSSGRPPSQPNTQDKTPSKVTARPSQPPLPRRSTRLKT. Residue lysine 879 forms a Glycyl lysine isopeptide (Lys-Gly) (interchain with G-Cter in SUMO2) linkage.

As to quaternary structure, interacts with CIP/WAF1.

The protein localises to the nucleus. May regulate the subcellular localization of CIP/WAF1. This chain is Cip1-interacting zinc finger protein (CIZ1), found in Homo sapiens (Human).